Here is a 273-residue protein sequence, read N- to C-terminus: Undecaprenyl-diphosphatase (273 aa).

Transmembrane regions (helical) follow at residues 1 to 21 (MEPI…FLPV), 39 to 59 (PALF…LIVF), 63 to 83 (LGMM…GIAP), 92 to 112 (LKLA…GLGL), 118 to 138 (LFFS…LLWL), 165 to 185 (GLAV…GLFL), 195 to 215 (FSFL…AVDL), 225 to 245 (ATVL…KVLI), and 252 to 272 (RFYL…WIGM).

The protein belongs to the UppP family.

It is found in the cell inner membrane. The catalysed reaction is di-trans,octa-cis-undecaprenyl diphosphate + H2O = di-trans,octa-cis-undecaprenyl phosphate + phosphate + H(+). Functionally, catalyzes the dephosphorylation of undecaprenyl diphosphate (UPP). Confers resistance to bacitracin. This Desulfosudis oleivorans (strain DSM 6200 / JCM 39069 / Hxd3) (Desulfococcus oleovorans) protein is Undecaprenyl-diphosphatase.